We begin with the raw amino-acid sequence, 199 residues long: RNA-binding protein, mRNA-processing factor 2a (199 aa).

The RRM domain occupies 20 to 97 (RTLFVSGLPV…QTLRLEFAKA (78 aa)).

In terms of assembly, interacts with Bucky ball (BUC); to mediate Balbiani body formation and oocyte polarity during early oogenesis.

It is found in the cytoplasm. It localises to the nucleus. Its subcellular location is the stress granule. Its function is as follows. RNA-binding protein involved in the regulation of smooth muscle cell differentiation and proliferation in the gastrointestinal system. RNA-binding protein localized in Balbiani body (electron-dense aggregates in the oocyte) and germ plasm during oogenesis, and may be required to maintain germ plasm mRNA translational repression. Translational regulator during topographic map formation in the visual system. Establishes oocyte polarity through interaction with Bucky ball (BUC). Acts as a pre-mRNA alternative splicing regulator. Mediates ACTN1 and FLNB alternative splicing. Likely binds to mRNA tandem CAC trinucleotide or CA dinucleotide motifs. This is RNA-binding protein, mRNA-processing factor 2a from Danio rerio (Zebrafish).